The chain runs to 93 residues: MSITPAKKSELISEYKVKDGDTGSAYVQCAILSERIRNLTEHLKIHKKDFHCRRGLMVLVCKRRKGLQYVRNKYGNDAYLDLVKRLGIRDVFH.

It belongs to the universal ribosomal protein uS15 family. As to quaternary structure, part of the 30S ribosomal subunit. Forms a bridge to the 50S subunit in the 70S ribosome, contacting the 23S rRNA.

Functionally, one of the primary rRNA binding proteins, it binds directly to 16S rRNA where it helps nucleate assembly of the platform of the 30S subunit by binding and bridging several RNA helices of the 16S rRNA. Forms an intersubunit bridge (bridge B4) with the 23S rRNA of the 50S subunit in the ribosome. In Anaplasma marginale (strain St. Maries), this protein is Small ribosomal subunit protein uS15.